A 362-amino-acid polypeptide reads, in one-letter code: 3-ketodihydrosphingosine reductase gsl-3 (362 aa).

Leu55 provides a ligand contact to NADP(+). 4 residues coordinate NADPH: Gly58, Ser60, Gly62, and Arg83. A GXSXG motif is present at residues 58–62 (GASEG). Asn84 is an NADP(+) binding site. The NADPH site is built by Arg87 and Asp113. Residues Asp113, Arg176, Tyr216, Lys220, Ile252, and Ser254 each coordinate NADP(+). Tyr216 (proton acceptor) is an active-site residue. Catalysis depends on Lys220, which acts as the Lowers pKa of active site Tyr. Residues 318–338 (NNWVLDTLMGWLIPIIYFFVL) traverse the membrane as a helical segment.

This sequence belongs to the short-chain dehydrogenases/reductases (SDR) family.

The protein localises to the endoplasmic reticulum membrane. It catalyses the reaction sphinganine + NADP(+) = 3-oxosphinganine + NADPH + H(+). The protein operates within lipid metabolism; sphingolipid metabolism. In terms of biological role, catalyzes the reduction of 3'-oxosphinganine (3-ketodihydrosphingosine/KDS) to sphinganine (dihydrosphingosine/DHS), the second step of de novo sphingolipid biosynthesis. The sequence is that of 3-ketodihydrosphingosine reductase gsl-3 (gsl-3) from Neurospora crassa (strain ATCC 24698 / 74-OR23-1A / CBS 708.71 / DSM 1257 / FGSC 987).